Consider the following 194-residue polypeptide: Imidazoleglycerol-phosphate dehydratase (194 aa).

Belongs to the imidazoleglycerol-phosphate dehydratase family.

It is found in the cytoplasm. The enzyme catalyses D-erythro-1-(imidazol-4-yl)glycerol 3-phosphate = 3-(imidazol-4-yl)-2-oxopropyl phosphate + H2O. Its pathway is amino-acid biosynthesis; L-histidine biosynthesis; L-histidine from 5-phospho-alpha-D-ribose 1-diphosphate: step 6/9. The polypeptide is Imidazoleglycerol-phosphate dehydratase (Chlorobaculum parvum (strain DSM 263 / NCIMB 8327) (Chlorobium vibrioforme subsp. thiosulfatophilum)).